Consider the following 976-residue polypeptide: MKLKSVFRSVLKYRKTNLSLLLLITYSIITLLYIFDHERYKLNLPKEDEHPEFNDLLETAWGDLQIITASFHPYTSKENDKVHDYLLKRVLEITGNSSFASVSDDKESERSILFQQQDPFNESSRFSRVTYFESSNILVKLEGKNPEEEGLLLSAHFDSVPTGYGATDDGMGVVSLLANLKYHIKHRPNRTLIFNFNNNEEFGLLGASTYFNHSWSNLTKYVINLEGTGAGGKAVLFRTSDTSTAKIYQQSVKENPFGNSIYQQGFYSRYVRSETDYKIYEENGMRGWDVAFYKPRNLYHTIKDSIQYTSKASLWHMLHTSLQLSAYVASNSLDTADQTPACYFDFIGLKFFVISAKTLFYWNCIFLLVSPVVAIGLYLISRDRMTWKSHSWLSWTRFPLSLAAGIIVQKLFSNDIIRSNPLTFSRNYFWPISAFFTQVIFTSYVLINCSNFFFPCADMKSLSIIELFIILWTILLFTSKLLYSSDYRYTGLYPLSIFFLLSTIAAILRLLALALGMRTRKRLGRECRDHHSNYSSHSQIDMERDGQENLEQPQDQFTSSQDDQASIQDDNVSTTSAGPSHNVDEDHGMDSSSQQHDERVPLLKGSNSMEEGLSTRENSLKLEYTDYAWIIQFLLIVPIPSFILFNSVDVIMDALNHTVQEGSKATFDVLRFGMVGSILMALPILPFFYKVNYITISLTALLFLISASKTLLVHPFTNSNPLKVRFSQNIDLSQGNAASVHVLGREGNFLKPMLQDLPSIKYSSTHINCTSVTNGMELCMYDGMQPNLLSTNGNTNISSMVKVHVLHNNRNSTERSPYEPIVAELLLEVKENRACTLTFESRHQAKSPVREITVYQKKNSAPQKTNITKTIKSASGINELQLHKLDFDQETYHIGVQWFPKLLTDGNLEDDKLGTKDELSVSISCYWGEYDSESVVNGTAVRKIPAFDELINYAPLSFSFTNEQKGLVIVKDAIIL.

Over 1–15 (MKLKSVFRSVLKYRK) the chain is Cytoplasmic. A helical transmembrane segment spans residues 16–36 (TNLSLLLLITYSIITLLYIFD). The Vacuolar segment spans residues 37–359 (HERYKLNLPK…KFFVISAKTL (323 aa)). N-linked (GlcNAc...) asparagine glycosylation is found at Asn96 and Asn121. The Zn(2+) site is built by His156 and Asp168. Asn189 is a glycosylation site (N-linked (GlcNAc...) asparagine). Glu200 serves as the catalytic Proton acceptor. Glu201 contacts Zn(2+). N-linked (GlcNAc...) asparagine glycosylation is found at Asn212 and Asn217. Residues Glu226 and His300 each contribute to the Zn(2+) site. The helical transmembrane segment at 360–380 (FYWNCIFLLVSPVVAIGLYLI) threads the bilayer. At 381–392 (SRDRMTWKSHSW) the chain is on the cytoplasmic side. Residues 393 to 412 (LSWTRFPLSLAAGIIVQKLF) traverse the membrane as a helical segment. The Vacuolar portion of the chain corresponds to 413 to 428 (SNDIIRSNPLTFSRNY). A helical transmembrane segment spans residues 429–449 (FWPISAFFTQVIFTSYVLINC). The Cytoplasmic segment spans residues 450-461 (SNFFFPCADMKS). Residues 462–482 (LSIIELFIILWTILLFTSKLL) traverse the membrane as a helical segment. Topologically, residues 483-496 (YSSDYRYTGLYPLS) are vacuolar. A helical membrane pass occupies residues 497 to 517 (IFFLLSTIAAILRLLALALGM). Over 518–627 (RTRKRLGREC…NSLKLEYTDY (110 aa)) the chain is Cytoplasmic. Positions 528 to 610 (RDHHSNYSSH…PLLKGSNSME (83 aa)) are disordered. Over residues 549 to 558 (NLEQPQDQFT) the composition is skewed to polar residues. The span at 559 to 570 (SSQDDQASIQDD) shows a compositional bias: low complexity. Over residues 582–601 (NVDEDHGMDSSSQQHDERVP) the composition is skewed to basic and acidic residues. A helical transmembrane segment spans residues 628–648 (AWIIQFLLIVPIPSFILFNSV). Topologically, residues 649-668 (DVIMDALNHTVQEGSKATFD) are vacuolar. The N-linked (GlcNAc...) asparagine glycan is linked to Asn656. Residues 669 to 689 (VLRFGMVGSILMALPILPFFY) traverse the membrane as a helical segment. The Cytoplasmic portion of the chain corresponds to 690–692 (KVN). The chain crosses the membrane as a helical span at residues 693–713 (YITISLTALLFLISASKTLLV). The Vacuolar segment spans residues 714-976 (HPFTNSNPLK…LVIVKDAIIL (263 aa)). N-linked (GlcNAc...) asparagine glycans are attached at residues Asn768, Asn796, Asn811, Asn866, and Asn937.

Belongs to the peptidase M28 family. The cofactor is Zn(2+).

It is found in the vacuole membrane. Its function is as follows. May be involved in vacuolar sorting and osmoregulation. This chain is Vacuolar membrane protease, found in Saccharomyces cerevisiae (strain Lalvin EC1118 / Prise de mousse) (Baker's yeast).